We begin with the raw amino-acid sequence, 392 residues long: Phospho-N-acetylmuramoyl-pentapeptide-transferase (392 aa).

10 consecutive transmembrane segments (helical) span residues 28–48 (IIAAGVFALLLGMLIGPKLIA), 76–96 (TMGGALILLCIAAGTLLFADL), 101–121 (VWVMLLLTLGYGFIGFLDDWL), 137–157 (MVLQTFFFLVAVFGLLTTWTL), 181–201 (WFNPDLGWFYVFFAWIVVVGT), 213–233 (GLAIVPTIVSAITFAVLCYVA), 268–288 (GAELAVFCAAIVGAGISFLWF), 295–315 (VFMGDIGSLALGGALGGLAML), 320–340 (VVSAIIHGIFFAEILSVMIQV), and 369–389 (KIIVRFWIVSILCGGVALLSL).

The protein belongs to the glycosyltransferase 4 family. MraY subfamily. Requires Mg(2+) as cofactor.

The protein localises to the cell inner membrane. It catalyses the reaction UDP-N-acetyl-alpha-D-muramoyl-L-alanyl-gamma-D-glutamyl-meso-2,6-diaminopimeloyl-D-alanyl-D-alanine + di-trans,octa-cis-undecaprenyl phosphate = di-trans,octa-cis-undecaprenyl diphospho-N-acetyl-alpha-D-muramoyl-L-alanyl-D-glutamyl-meso-2,6-diaminopimeloyl-D-alanyl-D-alanine + UMP. It functions in the pathway cell wall biogenesis; peptidoglycan biosynthesis. Functionally, catalyzes the initial step of the lipid cycle reactions in the biosynthesis of the cell wall peptidoglycan: transfers peptidoglycan precursor phospho-MurNAc-pentapeptide from UDP-MurNAc-pentapeptide onto the lipid carrier undecaprenyl phosphate, yielding undecaprenyl-pyrophosphoryl-MurNAc-pentapeptide, known as lipid I. The sequence is that of Phospho-N-acetylmuramoyl-pentapeptide-transferase from Myxococcus xanthus (strain DK1622).